Reading from the N-terminus, the 550-residue chain is Chaperonin GroEL (550 aa).

ATP-binding positions include 30 to 33, Lys51, 87 to 91, Gly415, 479 to 481, and Asp495; these read TLGP, DGTTT, and NAA. The disordered stretch occupies residues 526-550; the sequence is KDEKSDLGNSSAPSAGGMGGMGGMM. The segment covering 541-550 has biased composition (gly residues); the sequence is GGMGGMGGMM.

It belongs to the chaperonin (HSP60) family. As to quaternary structure, forms a cylinder of 14 subunits composed of two heptameric rings stacked back-to-back. Interacts with the co-chaperonin GroES.

Its subcellular location is the cytoplasm. It catalyses the reaction ATP + H2O + a folded polypeptide = ADP + phosphate + an unfolded polypeptide.. In terms of biological role, together with its co-chaperonin GroES, plays an essential role in assisting protein folding. The GroEL-GroES system forms a nano-cage that allows encapsulation of the non-native substrate proteins and provides a physical environment optimized to promote and accelerate protein folding. The polypeptide is Chaperonin GroEL (Buchnera aphidicola subsp. Baizongia pistaciae (strain Bp)).